The following is a 157-amino-acid chain: Protein Smg (157 aa).

It belongs to the Smg family.

The chain is Protein Smg from Buchnera aphidicola subsp. Acyrthosiphon pisum (strain 5A).